The chain runs to 502 residues: ATP synthase subunit alpha (502 aa).

Position 169-176 (169-176) interacts with ATP; sequence GDKQTGKT.

This sequence belongs to the ATPase alpha/beta chains family. As to quaternary structure, F-type ATPases have 2 components, CF(1) - the catalytic core - and CF(0) - the membrane proton channel. CF(1) has five subunits: alpha(3), beta(3), gamma(1), delta(1), epsilon(1). CF(0) has three main subunits: a(1), b(2) and c(9-12). The alpha and beta chains form an alternating ring which encloses part of the gamma chain. CF(1) is attached to CF(0) by a central stalk formed by the gamma and epsilon chains, while a peripheral stalk is formed by the delta and b chains.

The protein localises to the cell membrane. The enzyme catalyses ATP + H2O + 4 H(+)(in) = ADP + phosphate + 5 H(+)(out). Produces ATP from ADP in the presence of a proton gradient across the membrane. The alpha chain is a regulatory subunit. This chain is ATP synthase subunit alpha, found in Lachnoclostridium phytofermentans (strain ATCC 700394 / DSM 18823 / ISDg) (Clostridium phytofermentans).